We begin with the raw amino-acid sequence, 369 residues long: Probable dual-specificity RNA methyltransferase RlmN (369 aa).

The Proton acceptor role is filled by E108. Residues 114-351 enclose the Radical SAM core domain; it reads YPDRATLCIS…LAQGVSCTVR (238 aa). C121 and C362 are disulfide-bonded. Residues C128, C132, and C135 each contribute to the [4Fe-4S] cluster site. S-adenosyl-L-methionine-binding positions include 183-184, S217, 240-242, and N319; these read GE and SLH. The S-methylcysteine intermediate role is filled by C362.

Belongs to the radical SAM superfamily. RlmN family. [4Fe-4S] cluster serves as cofactor.

It is found in the cytoplasm. The catalysed reaction is adenosine(2503) in 23S rRNA + 2 reduced [2Fe-2S]-[ferredoxin] + 2 S-adenosyl-L-methionine = 2-methyladenosine(2503) in 23S rRNA + 5'-deoxyadenosine + L-methionine + 2 oxidized [2Fe-2S]-[ferredoxin] + S-adenosyl-L-homocysteine. It carries out the reaction adenosine(37) in tRNA + 2 reduced [2Fe-2S]-[ferredoxin] + 2 S-adenosyl-L-methionine = 2-methyladenosine(37) in tRNA + 5'-deoxyadenosine + L-methionine + 2 oxidized [2Fe-2S]-[ferredoxin] + S-adenosyl-L-homocysteine. In terms of biological role, specifically methylates position 2 of adenine 2503 in 23S rRNA and position 2 of adenine 37 in tRNAs. In Rhodococcus jostii (strain RHA1), this protein is Probable dual-specificity RNA methyltransferase RlmN.